Consider the following 341-residue polypeptide: Phosphoribosylformylglycinamidine cyclo-ligase (341 aa).

It belongs to the AIR synthase family.

The protein localises to the cytoplasm. The enzyme catalyses 2-formamido-N(1)-(5-O-phospho-beta-D-ribosyl)acetamidine + ATP = 5-amino-1-(5-phospho-beta-D-ribosyl)imidazole + ADP + phosphate + H(+). It participates in purine metabolism; IMP biosynthesis via de novo pathway; 5-amino-1-(5-phospho-D-ribosyl)imidazole from N(2)-formyl-N(1)-(5-phospho-D-ribosyl)glycinamide: step 2/2. This is Phosphoribosylformylglycinamidine cyclo-ligase from Alkaliphilus oremlandii (strain OhILAs) (Clostridium oremlandii (strain OhILAs)).